An 82-amino-acid polypeptide reads, in one-letter code: Large ribosomal subunit protein bL31 (82 aa).

This sequence belongs to the bacterial ribosomal protein bL31 family. Type A subfamily. Part of the 50S ribosomal subunit.

In terms of biological role, binds the 23S rRNA. In Rippkaea orientalis (strain PCC 8801 / RF-1) (Cyanothece sp. (strain PCC 8801)), this protein is Large ribosomal subunit protein bL31.